A 425-amino-acid chain; its full sequence is Glutamyl-tRNA reductase (425 aa).

Residues 49–52 (TCNR), serine 109, 114–116 (EGQ), and glutamine 120 each bind substrate. The active-site Nucleophile is cysteine 50. An NADP(+)-binding site is contributed by 189-194 (GAGETG).

The protein belongs to the glutamyl-tRNA reductase family. Homodimer.

It carries out the reaction (S)-4-amino-5-oxopentanoate + tRNA(Glu) + NADP(+) = L-glutamyl-tRNA(Glu) + NADPH + H(+). It participates in porphyrin-containing compound metabolism; protoporphyrin-IX biosynthesis; 5-aminolevulinate from L-glutamyl-tRNA(Glu): step 1/2. It functions in the pathway porphyrin-containing compound metabolism; chlorophyll biosynthesis. Its function is as follows. Catalyzes the NADPH-dependent reduction of glutamyl-tRNA(Glu) to glutamate 1-semialdehyde (GSA). This is Glutamyl-tRNA reductase from Chlorobium luteolum (strain DSM 273 / BCRC 81028 / 2530) (Pelodictyon luteolum).